Consider the following 153-residue polypeptide: Protein E6 (153 aa).

2 zinc fingers span residues 33–69 and 106–142; these read CVYCKKELSSSEVYNFACKDLRLVYREDSPYAVCNFC and CYRCQQPLTPEEKQLHCEYKKRFHRISRTWTGLCLQC. Positions 151–153 match the PDZ-binding domain motif; the sequence is TAV.

This sequence belongs to the papillomaviridae E6 protein family. In terms of assembly, forms homodimers. Interacts with ubiquitin-protein ligase UBE3A/E6-AP and thus forms a complex with human TP53. Interacts with human NFX1 and MAGI3. Interacts with human IRF3; this interaction inhibits the establishment of antiviral state. Interacts with human TYK2; this interaction inhibits JAK-STAT activation by interferon alpha. Interacts with host DLG1; this interaction leads to the proteasomal degradation of DLG1.

It localises to the host cytoplasm. It is found in the host nucleus. Plays a major role in the induction and maintenance of cellular transformation. Acts mainly as an oncoprotein by stimulating the destruction of many host cell key regulatory proteins. E6 associates with host UBE3A/E6-AP ubiquitin-protein ligase, and inactivates tumor suppressors TP53 and TP73 by targeting them to the 26S proteasome for degradation. In turn, DNA damage and chromosomal instabilities increase and lead to cell proliferation and cancer development. The complex E6/E6AP targets several other substrates to degradation via the proteasome including host DLG1 or NFX1, a repressor of human telomerase reverse transcriptase (hTERT). The resulting increased expression of hTERT prevents the shortening of telomere length leading to cell immortalization. Other cellular targets including BAK1, Fas-associated death domain-containing protein (FADD) and procaspase 8, are degraded by E6/E6AP causing inhibition of apoptosis. E6 also inhibits immune response by interacting with host IRF3 and TYK2. These interactions prevent IRF3 transcriptional activities and inhibit TYK2-mediated JAK-STAT activation by interferon alpha resulting in inhibition of the interferon signaling pathway. The sequence is that of Protein E6 from Homo sapiens (Human).